The primary structure comprises 324 residues: N-acetyl-gamma-glutamyl-phosphate reductase (324 aa).

The active site involves Cys-131.

This sequence belongs to the NAGSA dehydrogenase family. Type 1 subfamily.

It localises to the cytoplasm. It catalyses the reaction N-acetyl-L-glutamate 5-semialdehyde + phosphate + NADP(+) = N-acetyl-L-glutamyl 5-phosphate + NADPH + H(+). It functions in the pathway amino-acid biosynthesis; L-arginine biosynthesis; N(2)-acetyl-L-ornithine from L-glutamate: step 3/4. Catalyzes the NADPH-dependent reduction of N-acetyl-5-glutamyl phosphate to yield N-acetyl-L-glutamate 5-semialdehyde. This is N-acetyl-gamma-glutamyl-phosphate reductase from Bradyrhizobium sp. (strain BTAi1 / ATCC BAA-1182).